A 446-amino-acid polypeptide reads, in one-letter code: Tubulin beta-2 chain (446 aa).

The GTP site is built by Gln11, Glu69, Ser138, Gly142, Thr143, Gly144, Asn204, and Asn226. A Mg(2+)-binding site is contributed by Glu69. The disordered stretch occupies residues 424–446; it reads QYQEATADEEGEFDEDEEGGGDE. Residues 429 to 446 show a composition bias toward acidic residues; the sequence is TADEEGEFDEDEEGGGDE.

Belongs to the tubulin family. Dimer of alpha and beta chains. A typical microtubule is a hollow water-filled tube with an outer diameter of 25 nm and an inner diameter of 15 nM. Alpha-beta heterodimers associate head-to-tail to form protofilaments running lengthwise along the microtubule wall with the beta-tubulin subunit facing the microtubule plus end conferring a structural polarity. Microtubules usually have 13 protofilaments but different protofilament numbers can be found in some organisms and specialized cells. Mg(2+) is required as a cofactor.

It localises to the cytoplasm. The protein resides in the cytoskeleton. In terms of biological role, tubulin is the major constituent of microtubules, a cylinder consisting of laterally associated linear protofilaments composed of alpha- and beta-tubulin heterodimers. Microtubules grow by the addition of GTP-tubulin dimers to the microtubule end, where a stabilizing cap forms. Below the cap, tubulin dimers are in GDP-bound state, owing to GTPase activity of alpha-tubulin. This chain is Tubulin beta-2 chain (betaTub85D), found in Drosophila erecta (Fruit fly).